A 246-amino-acid polypeptide reads, in one-letter code: Acetoacetate decarboxylase (246 aa).

The active-site Schiff-base intermediate with acetoacetate is K115.

Belongs to the ADC family.

The catalysed reaction is acetoacetate + H(+) = acetone + CO2. Its function is as follows. Catalyzes the conversion of acetoacetate to acetone and carbon dioxide. This is Acetoacetate decarboxylase from Clostridium beijerinckii (Clostridium MP).